Reading from the N-terminus, the 154-residue chain is uncharacterized protein (154 aa).

Residues 1–33 (MTKRGIQAFAGGIILATAVLAAVFYLTDEDQAA) form the signal peptide.

This is an uncharacterized protein from Bacillus subtilis (strain 168).